The sequence spans 283 residues: MADITAALVKELRERTGAGMMDCKKALTEANGDIELAIENMRKSGAIKAAKKAGNVAADGVIKTRIEGNFGVILEVNCQTDFVAKDAGFQAFADKVLDAAFAGKITDVDVLKAQFEEERVALVAKIGENINIRRVASLEGDVLGSYLHGARIGVLISATAADEELVKQLAMHVAASKPEFVKPEDVSAEVVAKEYQVQLDIAMQSGKPKEIAEKMVEGRMKKFTGEVSLTGQPFVIDPSKTVGQLLKEKNADVTSFIRFEVGEGIEKAETDFAAEVAAMSKQS.

Positions 80-83 are involved in Mg(2+) ion dislocation from EF-Tu; it reads TDFV.

The protein belongs to the EF-Ts family.

It is found in the cytoplasm. Its function is as follows. Associates with the EF-Tu.GDP complex and induces the exchange of GDP to GTP. It remains bound to the aminoacyl-tRNA.EF-Tu.GTP complex up to the GTP hydrolysis stage on the ribosome. In Erwinia tasmaniensis (strain DSM 17950 / CFBP 7177 / CIP 109463 / NCPPB 4357 / Et1/99), this protein is Elongation factor Ts.